Consider the following 469-residue polypeptide: Uronate isomerase (469 aa).

The protein belongs to the metallo-dependent hydrolases superfamily. Uronate isomerase family.

It catalyses the reaction D-glucuronate = D-fructuronate. The enzyme catalyses aldehydo-D-galacturonate = keto-D-tagaturonate. It participates in carbohydrate metabolism; pentose and glucuronate interconversion. This is Uronate isomerase from Edwardsiella ictaluri (strain 93-146).